A 279-amino-acid polypeptide reads, in one-letter code: Urease accessory protein UreD (279 aa).

It belongs to the UreD family. In terms of assembly, ureD, UreF and UreG form a complex that acts as a GTP-hydrolysis-dependent molecular chaperone, activating the urease apoprotein by helping to assemble the nickel containing metallocenter of UreC. The UreE protein probably delivers the nickel.

The protein resides in the cytoplasm. Its function is as follows. Required for maturation of urease via the functional incorporation of the urease nickel metallocenter. This chain is Urease accessory protein UreD, found in Nostoc punctiforme (strain ATCC 29133 / PCC 73102).